Here is a 123-residue protein sequence, read N- to C-terminus: Large ribosomal subunit protein bL20 (123 aa).

It belongs to the bacterial ribosomal protein bL20 family.

Its function is as follows. Binds directly to 23S ribosomal RNA and is necessary for the in vitro assembly process of the 50S ribosomal subunit. It is not involved in the protein synthesizing functions of that subunit. This is Large ribosomal subunit protein bL20 from Pseudothermotoga lettingae (strain ATCC BAA-301 / DSM 14385 / NBRC 107922 / TMO) (Thermotoga lettingae).